Reading from the N-terminus, the 176-residue chain is Translation initiation factor IF-3 (176 aa).

The protein belongs to the IF-3 family. In terms of assembly, monomer.

The protein resides in the cytoplasm. IF-3 binds to the 30S ribosomal subunit and shifts the equilibrium between 70S ribosomes and their 50S and 30S subunits in favor of the free subunits, thus enhancing the availability of 30S subunits on which protein synthesis initiation begins. The polypeptide is Translation initiation factor IF-3 (Streptococcus equi subsp. zooepidemicus (strain H70)).